Reading from the N-terminus, the 273-residue chain is TIP41-like protein (273 aa).

Belongs to the TIP41 family.

Its subcellular location is the cytoplasm. May be a regulator of serine/threonine-protein phosphatases 2A (PP2A) and 4 (PP4). In Xenopus tropicalis (Western clawed frog), this protein is TIP41-like protein (tiprl).